The sequence spans 262 residues: Ribosome-recycling factor, mitochondrial (262 aa).

The N-terminal 55 residues, 1-55 (MALGIRCFRLLHPAFSSYLADLSRPVSEVPMKTVRGRQRDHIQYSAHPAVPVRQF), are a transit peptide targeting the mitochondrion.

This sequence belongs to the RRF family.

The protein localises to the mitochondrion. Its function is as follows. Responsible for the disassembly of ribosomes from messenger RNA at the termination of mitochondrial protein biosynthesis. Acts in collaboration with GFM2. Promotes mitochondrial ribosome recycling by dissolution of intersubunit contacts. The chain is Ribosome-recycling factor, mitochondrial (Mrrf) from Rattus norvegicus (Rat).